Reading from the N-terminus, the 493-residue chain is Neisserial heparin binding antigen (493 aa).

The first 22 residues, 1-22, serve as a signal peptide directing secretion; sequence MKEMMMFKRSVIAMACIFALSA. Cys-23 carries the N-palmitoyl cysteine lipid modification. Residue Cys-23 is the site of S-diacylglycerol cysteine attachment. Residues 27 to 206 form a disordered region; sequence GGGSPDVKSA…NPAPANGGSN (180 aa). Over residues 48 to 58 the composition is skewed to basic and acidic residues; the sequence is SEKETEAKEDA. Residues 59–75 show a composition bias toward low complexity; the sequence is PQAGSQGQGAPSAQGSQ. Polar residues-rich tracts occupy residues 106 to 123 and 132 to 147; these read DMPQ…NHTP and MENQ…QPAN. A compositionally biased stretch (low complexity) spans 165–188; that stretch reads AGGQNAGNTAAQGANQAGNNQAAG. Residues 301–311 carry the Arg-rich motif motif; that stretch reads RFRRSARSRRS.

It belongs to the NHBA family. The C-terminal beta-barrel forms a monomer. In terms of processing, cleaved in vivo by the Neisserial phase-variable autotransporter/serine protease NalP to give 2 fragments. The N-terminus remains in the cell outer membrane while the C-terminus (beginning on Ser-298) is soluble; this soluble fragment is called C2. Cleaved in vitro by human lactoferrin (LTF, between Arg-310 and Ser-311), this fragment is called C1. Recombinant and cell surface protein is cleaved by human saliva kallikrein (KLK1) between Ser-308 and Arg-309; in saliva kallikrein is more active on NHBA than lactoferrin. Human plasma kallikrein (KLKB1) cleaves in a similar manner to KLK1.

It localises to the cell outer membrane. In terms of biological role, a major human immunogenic protein detected in patients recovering from meningitidis, where it induces bactericidal antibodies. Binds human cells, heparin and heparan sulfate proteoglycan in vitro via the Arg-rich motif. Heparin-binding to this protein protects bacteria against killing by bactericidal antibodies (serum killing). The bacteria binds a number of human extracellular sialyated and/or sulfated glycans via this protein, including chondroitin sulfate, heparin and ganglioside GT3. Whole protein binds DNA. Functionally, plays a role in extracellular-DNA (eDNA) mediated biofilm formation. In some strains (including cc32 strain H44/76 but not cc11 strain B16B6) eDNA stimulates biofilm formation. When NHBA is not processed by NalP, biofilm formation increases. This is probably because the number of positively charged, NHBA- and IgA-derived DNA-binding peptides on the cell surface rises, resulting in increased DNA-binding peptides and increased biofilm formation. The chain is Neisserial heparin binding antigen from Neisseria meningitidis serogroup B / serotype 15 (strain H44/76).